We begin with the raw amino-acid sequence, 195 residues long: Peptide methionine sulfoxide reductase MsrA 2 (195 aa).

C18 is an active-site residue.

Belongs to the MsrA Met sulfoxide reductase family.

It catalyses the reaction L-methionyl-[protein] + [thioredoxin]-disulfide + H2O = L-methionyl-(S)-S-oxide-[protein] + [thioredoxin]-dithiol. It carries out the reaction [thioredoxin]-disulfide + L-methionine + H2O = L-methionine (S)-S-oxide + [thioredoxin]-dithiol. In terms of biological role, has an important function as a repair enzyme for proteins that have been inactivated by oxidation. Catalyzes the reversible oxidation-reduction of methionine sulfoxide in proteins to methionine. In Mesorhizobium japonicum (strain LMG 29417 / CECT 9101 / MAFF 303099) (Mesorhizobium loti (strain MAFF 303099)), this protein is Peptide methionine sulfoxide reductase MsrA 2 (msrA2).